The chain runs to 115 residues: Large ribosomal subunit protein uL23 (115 aa).

This sequence belongs to the universal ribosomal protein uL23 family. In terms of assembly, part of the 50S ribosomal subunit. Contacts protein L29, and trigger factor when it is bound to the ribosome.

Its function is as follows. One of the early assembly proteins it binds 23S rRNA. One of the proteins that surrounds the polypeptide exit tunnel on the outside of the ribosome. Forms the main docking site for trigger factor binding to the ribosome. In Granulibacter bethesdensis (strain ATCC BAA-1260 / CGDNIH1), this protein is Large ribosomal subunit protein uL23.